Here is a 59-residue protein sequence, read N- to C-terminus: Single-pass membrane and coiled-coil domain-containing protein 4 (59 aa).

Residues 1–23 form a disordered region; sequence MRQLKGKPKKETSKDKRERKQAM. A compositionally biased stretch (basic and acidic residues) spans 9 to 23; that stretch reads KKETSKDKRERKQAM. Residues 9-30 adopt a coiled-coil conformation; the sequence is KKETSKDKRERKQAMQDARKQV. The chain crosses the membrane as a helical span at residues 32–52; it reads TVVLPTVAVVVLLIVFFVYAA.

Belongs to the SMCO4 family.

It is found in the membrane. The chain is Single-pass membrane and coiled-coil domain-containing protein 4 (smco4) from Takifugu rubripes (Japanese pufferfish).